The chain runs to 432 residues: Transcriptional adapter 3 (432 aa).

Lysine 21 participates in a covalent cross-link: Glycyl lysine isopeptide (Lys-Gly) (interchain with G-Cter in SUMO2). Residues 40 to 69 (IEELDTLQLELETLLSSASRRLRVLEAETQ) are a coiled coil. A disordered region spans residues 87 to 126 (GRDHELGAPPKHGKPKKQKLEGKAGHGPGPGPGRPKSKNL). Lysine 129 participates in a covalent cross-link: Glycyl lysine isopeptide (Lys-Gly) (interchain with G-Cter in SUMO2). The segment at 272–319 (NIISPMEDSPIPDMSGKESGADGASTSPRNQNKPFSVPHTKSLESRIK) is disordered. 2 positions are modified to phosphoserine: serine 280 and serine 298. Polar residues predominate over residues 295–305 (ASTSPRNQNKP). The stretch at 367 to 407 (LLRLAKEEVSRQELRQRVRMADNEVMDAFRKIMAARQKKRT) forms a coiled coil. Lysine 418 carries the N6-acetyllysine modification.

Belongs to the NGG1 family. In terms of assembly, the PCAF complex is composed of a number of TBP-associated factors (TAFS), such as TAF5, TAF5L, TAF6, TAF6L, TAF9, TAF10 and TAF12, PCAF, and also PCAF-associated factors (PAFs), such as TADA2L/ADA2, TADA3L/ADA3 and SPT3. Interacts directly with TADA2L and PCAF and also with the high-risk HPV oncoprotein E6. Component of the STAGA transcription coactivator-HAT complex, at least composed of SUPT3H, GCN5L2, TAF5L, TAF6L, SUPT7L, TADA3L, TAD1L, TAF10, TAF12, TRRAP and TAF9. Component of the TFTC-HAT complex. Component of the ADA2A-containing complex (ATAC), composed of KAT14, KAT2A, TADA2L, TADA3L, ZZ3, MBIP, WDR5, YEATS2, CCDC101 and DR1. As to expression, ubiquitously expressed.

The protein resides in the nucleus. Functions as a component of the PCAF complex. The PCAF complex is capable of efficiently acetylating histones in a nucleosomal context. The PCAF complex could be considered as the human version of the yeast SAGA complex. Also known as a coactivator for p53/TP53-dependent transcriptional activation. Component of the ATAC complex, a complex with histone acetyltransferase activity on histones H3 and H4. The sequence is that of Transcriptional adapter 3 (TADA3) from Homo sapiens (Human).